We begin with the raw amino-acid sequence, 286 residues long: Octanoyltransferase (286 aa).

The 229-residue stretch at 50–278 (LRTPDELWIV…NIAQRHAGVI (229 aa)) folds into the BPL/LPL catalytic domain. Substrate is bound by residues 89–96 (RGGQVTWH), 190–192 (SLG), and 203–205 (GVA). Residue C221 is the Acyl-thioester intermediate of the active site.

It belongs to the LipB family.

Its subcellular location is the cytoplasm. It carries out the reaction octanoyl-[ACP] + L-lysyl-[protein] = N(6)-octanoyl-L-lysyl-[protein] + holo-[ACP] + H(+). The protein operates within protein modification; protein lipoylation via endogenous pathway; protein N(6)-(lipoyl)lysine from octanoyl-[acyl-carrier-protein]: step 1/2. Functionally, catalyzes the transfer of endogenously produced octanoic acid from octanoyl-acyl-carrier-protein onto the lipoyl domains of lipoate-dependent enzymes. Lipoyl-ACP can also act as a substrate although octanoyl-ACP is likely to be the physiological substrate. The polypeptide is Octanoyltransferase (Psychrobacter arcticus (strain DSM 17307 / VKM B-2377 / 273-4)).